The sequence spans 189 residues: Transcription factor FapR (189 aa).

This sequence belongs to the FapR family.

In terms of biological role, transcriptional factor involved in regulation of membrane lipid biosynthesis by repressing genes involved in fatty acid and phospholipid metabolism. This is Transcription factor FapR from Listeria monocytogenes serotype 4a (strain HCC23).